The sequence spans 783 residues: RNA exonuclease 5 (783 aa).

One can recognise an Exonuclease domain in the interval Leu230–Ala378. RRM domains are found at residues Ser503–Thr577 and Gly598–His677.

The polypeptide is RNA exonuclease 5 (REXO5) (Bos taurus (Bovine)).